Reading from the N-terminus, the 119-residue chain is Ribosome-binding factor A (119 aa).

The protein belongs to the RbfA family. As to quaternary structure, monomer. Binds 30S ribosomal subunits, but not 50S ribosomal subunits or 70S ribosomes.

It localises to the cytoplasm. One of several proteins that assist in the late maturation steps of the functional core of the 30S ribosomal subunit. Associates with free 30S ribosomal subunits (but not with 30S subunits that are part of 70S ribosomes or polysomes). Required for efficient processing of 16S rRNA. May interact with the 5'-terminal helix region of 16S rRNA. This chain is Ribosome-binding factor A, found in Pelodictyon phaeoclathratiforme (strain DSM 5477 / BU-1).